The following is a 120-amino-acid chain: Small ribosomal subunit protein bS6 (120 aa).

Belongs to the bacterial ribosomal protein bS6 family.

In terms of biological role, binds together with bS18 to 16S ribosomal RNA. In Blochmanniella floridana, this protein is Small ribosomal subunit protein bS6.